Here is a 62-residue protein sequence, read N- to C-terminus: Kunitz-type serine protease inhibitor (62 aa).

Residues 2–52 (CYLPDDPGVCKAHIPRFYYNPASNKCKNFIYGGCGGNANNFETRAECRHTC) form the BPTI/Kunitz inhibitor domain. 3 cysteine pairs are disulfide-bonded: cysteine 2-cysteine 52, cysteine 11-cysteine 35, and cysteine 27-cysteine 48.

It belongs to the venom Kunitz-type family. Expressed by the venom gland.

The protein resides in the secreted. In terms of biological role, serine protease inhibitor that inhibits trypsin. The recombinant protein also barely blocks voltage-gated potassium channel Kv1.3/KCNA3 (3.70% inhibition at 60 nM of toxin). This chain is Kunitz-type serine protease inhibitor, found in Eristicophis macmahoni (Leaf-nosed viper).